The sequence spans 94 residues: Neutrophil defensin 6 (94 aa).

A signal peptide spans 1–19; sequence MRTIAILAAILLFALLAQA. Residues 20-61 constitute a propeptide that is removed on maturation; that stretch reads KSLQETADEAATQEQPGEDDQDLAVSFEENGLSTLRASGSQA. Cystine bridges form between Cys65–Cys93, Cys67–Cys82, and Cys72–Cys92.

It belongs to the alpha-defensin family.

It is found in the secreted. Its function is as follows. Defensins 6 and 7 have bacteriostatic activity against Gram-positive bacteria S.aureus and L.monocytogenes and Gram-negative bacterium E.coli and antifungal activity against C.neoformans. Defensin 7 has microbicidial activity against Gram-positive bacteria S.aureus and L.monocytogenes. The polypeptide is Neutrophil defensin 6 (Macaca mulatta (Rhesus macaque)).